The primary structure comprises 98 residues: Small ribosomal subunit protein bS6 (98 aa).

The protein belongs to the bacterial ribosomal protein bS6 family.

Functionally, binds together with bS18 to 16S ribosomal RNA. The chain is Small ribosomal subunit protein bS6 from Levilactobacillus brevis (strain ATCC 367 / BCRC 12310 / CIP 105137 / JCM 1170 / LMG 11437 / NCIMB 947 / NCTC 947) (Lactobacillus brevis).